The sequence spans 142 residues: Chorion class A protein Ld19 (142 aa).

Positions 1–18 are cleaved as a signal peptide; the sequence is MNSFALLLVCIQACLVQS.

The protein belongs to the chorion protein family.

Functionally, this protein is one of many from the eggshell of the gypsy moth. In Lymantria dispar (Gypsy moth), this protein is Chorion class A protein Ld19.